The sequence spans 292 residues: Protease HtpX homolog (292 aa).

A run of 2 helical transmembrane segments spans residues 4–24 and 39–59; these read ILLF…VASL and GALL…SLLI. Residue histidine 144 coordinates Zn(2+). The active site involves glutamate 145. Histidine 148 contacts Zn(2+). 2 consecutive transmembrane segments (helical) span residues 159 to 179 and 199 to 219; these read LIQG…GYAV and VTTI…VAWF. Glutamate 224 contributes to the Zn(2+) binding site.

The protein belongs to the peptidase M48B family. Zn(2+) serves as cofactor.

It localises to the cell inner membrane. The protein is Protease HtpX homolog of Verminephrobacter eiseniae (strain EF01-2).